The following is an 80-amino-acid chain: MADTGDMEHIFKRFDTNGDGKISLAELTDALRTLGSTSADEVQRMMAEIDTDGDGFIDFDEFISFCNANPGLMKDVAKVF.

EF-hand domains follow at residues 2 to 37 and 40 to 72; these read ADTG…LGST and DEVQ…NPGL. Ca(2+) is bound by residues aspartate 15, asparagine 17, aspartate 19, lysine 21, glutamate 26, aspartate 50, aspartate 52, aspartate 54, and glutamate 61.

This Cynodon dactylon (Bermuda grass) protein is Polcalcin Cyn d 7.